Consider the following 156-residue polypeptide: Protein GLUTAMINE DUMPER 4 (156 aa).

The Extracellular portion of the chain corresponds to 1–39; that stretch reads MRPLSIKPTSLDVARHATSVESFGNHRPPISPWHSPVPY. A helical transmembrane segment spans residues 40–60; sequence LFGGLAAMLGLIAFALLILAC. Over 61–156 the chain is Cytoplasmic; it reads SYWRLSTSGD…AKENEETTSQ (96 aa). The disordered stretch occupies residues 67–87; the sequence is TSGDDSGERVDEEKESRSGVK. Basic and acidic residues predominate over residues 72 to 84; it reads SGERVDEEKESRS. Residues 99-103 carry the VIMAG motif; sequence VIMAG. The interval 136–156 is disordered; sequence AGEEKMGDREKAKENEETTSQ.

Belongs to the GLUTAMINE DUMPER 1 (TC 9.B.60) family. As to expression, expressed in the vascular tissues, even in the minor veins of the leaves.

It is found in the membrane. Its function is as follows. Probable subunit of an amino acid transporter involved in the regulation of the amino acid metabolism. Stimulates amino acid export by activating nonselective amino acid facilitators. This is Protein GLUTAMINE DUMPER 4 (GDU4) from Arabidopsis thaliana (Mouse-ear cress).